Here is a 292-residue protein sequence, read N- to C-terminus: MPAQRLDGRQLAAQLEEVMAAAIASGLPRAGRPPGLAVLRVGDDPASGVYVANKEKACARVGLVSHGAHLDAATPQAEIEAKLRQLNQDPAVDGILVQLPVPAGLDDRALLLELDPAKDADGLHPLNLGRLLRGEPGPRSCTPAGVMALLRSNGIDPAGKRAVVIGRSILVGQPMALMLQAANATVTVVHSRTADLAAHTREAEILVVAAGKPGMIGADHVRPGAAVVDVGIHRKPEGGLCGDVRSAEVEPIASALSPVPGGVGPMTVTMLLLNTVRAWSQRFDLPDPTPGY.

NADP(+) is bound by residues 166–168, serine 191, and isoleucine 232; that span reads GRS.

Belongs to the tetrahydrofolate dehydrogenase/cyclohydrolase family. Homodimer.

It catalyses the reaction (6R)-5,10-methylene-5,6,7,8-tetrahydrofolate + NADP(+) = (6R)-5,10-methenyltetrahydrofolate + NADPH. The enzyme catalyses (6R)-5,10-methenyltetrahydrofolate + H2O = (6R)-10-formyltetrahydrofolate + H(+). Its pathway is one-carbon metabolism; tetrahydrofolate interconversion. In terms of biological role, catalyzes the oxidation of 5,10-methylenetetrahydrofolate to 5,10-methenyltetrahydrofolate and then the hydrolysis of 5,10-methenyltetrahydrofolate to 10-formyltetrahydrofolate. This chain is Bifunctional protein FolD, found in Synechococcus sp. (strain RCC307).